The following is a 199-amino-acid chain: Imidazoleglycerol-phosphate dehydratase (199 aa).

Belongs to the imidazoleglycerol-phosphate dehydratase family.

Its subcellular location is the cytoplasm. The enzyme catalyses D-erythro-1-(imidazol-4-yl)glycerol 3-phosphate = 3-(imidazol-4-yl)-2-oxopropyl phosphate + H2O. Its pathway is amino-acid biosynthesis; L-histidine biosynthesis; L-histidine from 5-phospho-alpha-D-ribose 1-diphosphate: step 6/9. This is Imidazoleglycerol-phosphate dehydratase from Bifidobacterium longum (strain NCC 2705).